A 564-amino-acid polypeptide reads, in one-letter code: Arginine--tRNA ligase (564 aa).

Positions 122 to 132 match the 'HIGH' region motif; the sequence is PNIAKPFSIGH.

This sequence belongs to the class-I aminoacyl-tRNA synthetase family. Monomer.

Its subcellular location is the cytoplasm. The catalysed reaction is tRNA(Arg) + L-arginine + ATP = L-arginyl-tRNA(Arg) + AMP + diphosphate. The sequence is that of Arginine--tRNA ligase from Lactococcus lactis subsp. cremoris (strain MG1363).